The sequence spans 779 residues: Subtilisin-like protease SBT3.18 (779 aa).

The N-terminal stretch at 1 to 21 (MYFWVMFFTLMIKVKLYITNG) is a signal peptide. A propeptide spans 22 to 109 (DIFQNRPTVY…VFKSKSLKLH (88 aa)) (activation peptide). The region spanning 30 to 109 (VYVVYLGANR…VFKSKSLKLH (80 aa)) is the Inhibitor I9 domain. A glycan (N-linked (GlcNAc...) asparagine) is linked at Asn84. The Peptidase S8 domain maps to 113-621 (SWDFLGLAVD…AGHINPLKAM (509 aa)). Residues Asp144 and His221 each act as charge relay system in the active site. N-linked (GlcNAc...) asparagine glycosylation is found at Asn236 and Asn406. Residue Ser553 is the Charge relay system of the active site.

This sequence belongs to the peptidase S8 family.

It is found in the secreted. The polypeptide is Subtilisin-like protease SBT3.18 (Arabidopsis thaliana (Mouse-ear cress)).